A 295-amino-acid polypeptide reads, in one-letter code: UDP-N-acetylenolpyruvoylglucosamine reductase (295 aa).

Residues 24-188 (KVGGDAEIFF…LKAVFKVNKG (165 aa)) enclose the FAD-binding PCMH-type domain. Residue R168 is part of the active site. Catalysis depends on S217, which acts as the Proton donor. E287 is a catalytic residue.

It belongs to the MurB family. It depends on FAD as a cofactor.

The protein resides in the cytoplasm. The catalysed reaction is UDP-N-acetyl-alpha-D-muramate + NADP(+) = UDP-N-acetyl-3-O-(1-carboxyvinyl)-alpha-D-glucosamine + NADPH + H(+). It functions in the pathway cell wall biogenesis; peptidoglycan biosynthesis. In terms of biological role, cell wall formation. In Rickettsia akari (strain Hartford), this protein is UDP-N-acetylenolpyruvoylglucosamine reductase.